The following is a 161-amino-acid chain: MDDIYKAAVEQLTEEQKNEFKAAFDIFVLGAEDGCISTKELGKVMRMLGQNPTPEELQEMIDEVDEDGSGTVDFDEFLVMMVRCMKDDSKGKSEEELSDLFRMFDKNADGYIDLEELKIMLQATGETITEDDIEELMKDGDKNNDGRIDYDEFLEFMKGVE.

Position 1 is an N-acetylmethionine (methionine 1). EF-hand domains lie at 16-51, 52-87, 92-127, and 128-161; these read QKNE…LGQN, PTPE…CMKD, KSEE…TGET, and ITED…KGVE. Positions 65, 67, 69, 71, and 76 each coordinate Ca(2+). Position 98 is a phosphoserine (serine 98). Ca(2+)-binding residues include aspartate 105, asparagine 107, aspartate 109, tyrosine 111, glutamate 116, aspartate 141, asparagine 143, aspartate 145, arginine 147, and glutamate 152.

It belongs to the troponin C family.

Functionally, troponin is the central regulatory protein of striated muscle contraction. Tn consists of three components: Tn-I which is the inhibitor of actomyosin ATPase, Tn-T which contains the binding site for tropomyosin and Tn-C. The binding of calcium to Tn-C abolishes the inhibitory action of Tn on actin filaments. This Bos taurus (Bovine) protein is Troponin C, slow skeletal and cardiac muscles (TNNC1).